The following is a 446-amino-acid chain: Tol-Pal system protein TolB (446 aa).

The first 36 residues, 1–36 (MMDVQTVRRGNAVQSLMSKLILPLVMAVAFALPARA), serve as a signal peptide directing secretion. Residues 424 to 446 (GYNERPSPTPTFASDPAWSPRIQ) are disordered.

Belongs to the TolB family. As to quaternary structure, the Tol-Pal system is composed of five core proteins: the inner membrane proteins TolA, TolQ and TolR, the periplasmic protein TolB and the outer membrane protein Pal. They form a network linking the inner and outer membranes and the peptidoglycan layer.

It localises to the periplasm. Its function is as follows. Part of the Tol-Pal system, which plays a role in outer membrane invagination during cell division and is important for maintaining outer membrane integrity. The sequence is that of Tol-Pal system protein TolB from Parvibaculum lavamentivorans (strain DS-1 / DSM 13023 / NCIMB 13966).